The following is a 122-amino-acid chain: Large ribosomal subunit protein uL14 (122 aa).

This sequence belongs to the universal ribosomal protein uL14 family. Part of the 50S ribosomal subunit. Forms a cluster with proteins L3 and L19. In the 70S ribosome, L14 and L19 interact and together make contacts with the 16S rRNA in bridges B5 and B8.

Binds to 23S rRNA. Forms part of two intersubunit bridges in the 70S ribosome. This is Large ribosomal subunit protein uL14 from Sphingopyxis alaskensis (strain DSM 13593 / LMG 18877 / RB2256) (Sphingomonas alaskensis).